The chain runs to 142 residues: Nucleoside diphosphate kinase (142 aa).

ATP-binding residues include Lys-11, Phe-59, Arg-87, Thr-93, Arg-104, and Asn-114. His-117 acts as the Pros-phosphohistidine intermediate in catalysis.

It belongs to the NDK family. As to quaternary structure, homotetramer. Mg(2+) serves as cofactor.

The protein resides in the cytoplasm. The enzyme catalyses a 2'-deoxyribonucleoside 5'-diphosphate + ATP = a 2'-deoxyribonucleoside 5'-triphosphate + ADP. The catalysed reaction is a ribonucleoside 5'-diphosphate + ATP = a ribonucleoside 5'-triphosphate + ADP. Major role in the synthesis of nucleoside triphosphates other than ATP. The ATP gamma phosphate is transferred to the NDP beta phosphate via a ping-pong mechanism, using a phosphorylated active-site intermediate. The sequence is that of Nucleoside diphosphate kinase from Aeromonas salmonicida (strain A449).